The sequence spans 44 residues: Cytochrome b559 subunit beta (44 aa).

The helical transmembrane segment at 19–35 (WIAVHTLAVPSVFFLGA) threads the bilayer. Residue H23 participates in heme binding.

Belongs to the PsbE/PsbF family. As to quaternary structure, heterodimer of an alpha subunit and a beta subunit. PSII is composed of 1 copy each of membrane proteins PsbA, PsbB, PsbC, PsbD, PsbE, PsbF, PsbH, PsbI, PsbJ, PsbK, PsbL, PsbM, PsbT, PsbX, PsbY, PsbZ, Psb30/Ycf12, peripheral proteins PsbO, CyanoQ (PsbQ), PsbU, PsbV and a large number of cofactors. It forms dimeric complexes. Heme b is required as a cofactor.

The protein resides in the cellular thylakoid membrane. This b-type cytochrome is tightly associated with the reaction center of photosystem II (PSII). PSII is a light-driven water:plastoquinone oxidoreductase that uses light energy to abstract electrons from H(2)O, generating O(2) and a proton gradient subsequently used for ATP formation. It consists of a core antenna complex that captures photons, and an electron transfer chain that converts photonic excitation into a charge separation. This Cyanothece sp. (strain PCC 7425 / ATCC 29141) protein is Cytochrome b559 subunit beta.